The sequence spans 157 residues: Nucleoside diphosphate kinase (157 aa).

ATP contacts are provided by Lys12, Phe60, Arg88, Thr94, and Arg105. His121 (pros-phosphohistidine intermediate) is an active-site residue.

This sequence belongs to the NDK family. Mg(2+) serves as cofactor.

It is found in the cytoplasm. The enzyme catalyses a 2'-deoxyribonucleoside 5'-diphosphate + ATP = a 2'-deoxyribonucleoside 5'-triphosphate + ADP. It catalyses the reaction a ribonucleoside 5'-diphosphate + ATP = a ribonucleoside 5'-triphosphate + ADP. Major role in the synthesis of nucleoside triphosphates other than ATP. The ATP gamma phosphate is transferred to the NDP beta phosphate via a ping-pong mechanism, using a phosphorylated active-site intermediate. The polypeptide is Nucleoside diphosphate kinase (Pyrococcus horikoshii (strain ATCC 700860 / DSM 12428 / JCM 9974 / NBRC 100139 / OT-3)).